A 247-amino-acid polypeptide reads, in one-letter code: ATP synthase subunit a, chloroplastic (247 aa).

5 helical membrane-spanning segments follow: residues 38-58 (QVLI…SIAV), 95-115 (VPFI…GALL), 134-154 (INTT…AGLT), 199-219 (LVVV…VMFL), and 220-240 (GLFT…AYIG).

Belongs to the ATPase A chain family. As to quaternary structure, F-type ATPases have 2 components, CF(1) - the catalytic core - and CF(0) - the membrane proton channel. CF(1) has five subunits: alpha(3), beta(3), gamma(1), delta(1), epsilon(1). CF(0) has four main subunits: a, b, b' and c.

Its subcellular location is the plastid. It is found in the chloroplast thylakoid membrane. Functionally, key component of the proton channel; it plays a direct role in the translocation of protons across the membrane. In Eucalyptus globulus subsp. globulus (Tasmanian blue gum), this protein is ATP synthase subunit a, chloroplastic.